We begin with the raw amino-acid sequence, 493 residues long: Aerolysin (493 aa).

The signal sequence occupies residues 1–23; sequence MQKIKLTGLSLIISGLLMAQAQA. Intrachain disulfides connect Cys-42-Cys-98 and Cys-182-Cys-187. The tract at residues 68-84 is interaction with host N-linked glycan; the sequence is WQISGLANGWVIMGPGY. Residues 256 to 288 are part of the transmembrane beta-barrel after proteolytic activation of the toxin and insertion into the host membrane; sequence YGLSEKVTTKNKFKWPLVGETELSIEIAANQSW. Residues 346 to 355 are interaction with glycans from host GPI-anchor; sequence RWGGNAWYTH. The propeptide occupies 446 to 493; the sequence is AADSKVRRARSVDGAGQGLRLEIPLDAQELSGLGFNNVSLSVTPAANQ.

The protein belongs to the aerolysin family. In terms of assembly, homodimer in solution; homoheptamer in the host membrane. After binding to GPI-anchored proteins in target membranes and proteolytic removal of the C-terminal propeptide, the protein assembles into a heptameric pre-pore complex. A further conformation change leads to insertion into the host membrane. Post-translationally, proteolytic cleavage and subsequent release of the propeptide trigger a major conformation change, leading to the formation of a heptameric pre-pore that then inserts into the host membrane.

Its subcellular location is the secreted. It is found in the host cell membrane. Functionally, secreted, cytolytic toxin that forms pores in host membranes after proteolytic removal of a C-terminal propeptide, leading to destruction of the membrane permeability barrier and host cell death. The pores are formed by transmembrane beta-strands and are approximately 3 nm in diameter. This is Aerolysin (aerA) from Aeromonas hydrophila.